A 424-amino-acid polypeptide reads, in one-letter code: Arogenate dehydratase 3, chloroplastic (424 aa).

Residues 1-24 (MRTLLPSHTPATVTTAARRRHVIH) constitute a chloroplast transit peptide. Positions 57 to 71 (EQSESLSSNSNGSSS) are enriched in low complexity. Residues 57–77 (EQSESLSSNSNGSSSYHVSAV) are disordered. Positions 122–299 (RVAYQGVPGA…NVTRFVMLAR (178 aa)) constitute a Prephenate dehydratase domain. In terms of domain architecture, ACT spans 313-404 (SIVFAHEKGT…SFLRVLGSYP (92 aa)).

In terms of assembly, may interact with GPA1. Expressed in roots, leaves, stems, flowers and siliques.

It is found in the plastid. The protein resides in the chloroplast stroma. The catalysed reaction is L-arogenate + H(+) = L-phenylalanine + CO2 + H2O. It participates in amino-acid biosynthesis; L-phenylalanine biosynthesis; L-phenylalanine from L-arogenate: step 1/1. Its function is as follows. Converts the prephenate produced from the shikimate-chorismate pathway into phenylalanine. Together with GCR1 and GPA1, required for blue light-mediated synthesis of phenylpyruvate and subsequently of phenylalanine (Phe), in etiolated seedlings. This chain is Arogenate dehydratase 3, chloroplastic, found in Arabidopsis thaliana (Mouse-ear cress).